Reading from the N-terminus, the 247-residue chain is ATP synthase subunit a, chloroplastic (247 aa).

5 helical membrane-spanning segments follow: residues 38–58 (QVLI…ILVV), 95–115 (VPFI…GALL), 134–154 (INTT…AGIS), 199–219 (LVVV…VMFL), and 220–240 (GLFT…AYIG).

Belongs to the ATPase A chain family. As to quaternary structure, F-type ATPases have 2 components, CF(1) - the catalytic core - and CF(0) - the membrane proton channel. CF(1) has five subunits: alpha(3), beta(3), gamma(1), delta(1), epsilon(1). CF(0) has four main subunits: a, b, b' and c.

It is found in the plastid. The protein resides in the chloroplast thylakoid membrane. In terms of biological role, key component of the proton channel; it plays a direct role in the translocation of protons across the membrane. In Cicer arietinum (Chickpea), this protein is ATP synthase subunit a, chloroplastic.